We begin with the raw amino-acid sequence, 257 residues long: MKDVQNERDYRGIYLRKVGIKNIHWPIKIITKSGEYQSTVANIDISVDLREDLRGTHMSRFVEVLNGIDFLHPENLGKILQEVREKLKADSSHIKITFPYFIFKKTPVSQIASPNMIECVIEAELSKKLYMIIGVKVPIHTLCPCSKEISEYGAHNQRAIAEIYIKSKKLIWFEDLVEIAERSASAPIYSLLKRPDEKYITETAYNNPKFVEDVVRDIVSELEKEPKISWYRVEVTSFESIHNHNAFACVEKGWIKK.

This sequence belongs to the GTP cyclohydrolase IV family.

It catalyses the reaction GTP + H2O = 7,8-dihydroneopterin 3'-triphosphate + formate + H(+). The protein operates within cofactor biosynthesis; 7,8-dihydroneopterin triphosphate biosynthesis; 7,8-dihydroneopterin triphosphate from GTP: step 1/1. In terms of biological role, converts GTP to 7,8-dihydroneopterin triphosphate. This chain is GTP cyclohydrolase FolE2, found in Dictyoglomus turgidum (strain DSM 6724 / Z-1310).